The following is a 330-amino-acid chain: Beta-ketoacyl-[acyl-carrier-protein] synthase III (330 aa).

Residues Cys118 and His257 contribute to the active site. The segment at 258-262 is ACP-binding; sequence QANLR. The active site involves Asn287.

This sequence belongs to the thiolase-like superfamily. FabH family. In terms of assembly, homodimer.

Its subcellular location is the cytoplasm. It catalyses the reaction malonyl-[ACP] + acetyl-CoA + H(+) = 3-oxobutanoyl-[ACP] + CO2 + CoA. The protein operates within lipid metabolism; fatty acid biosynthesis. Its function is as follows. Catalyzes the condensation reaction of fatty acid synthesis by the addition to an acyl acceptor of two carbons from malonyl-ACP. Catalyzes the first condensation reaction which initiates fatty acid synthesis and may therefore play a role in governing the total rate of fatty acid production. Possesses both acetoacetyl-ACP synthase and acetyl transacylase activities. Its substrate specificity determines the biosynthesis of branched-chain and/or straight-chain of fatty acids. This is Beta-ketoacyl-[acyl-carrier-protein] synthase III from Nitratidesulfovibrio vulgaris (strain DSM 19637 / Miyazaki F) (Desulfovibrio vulgaris).